The sequence spans 61 residues: Small ribosomal subunit protein uS14 (61 aa).

Residues Cys24, Cys27, Cys40, and Cys43 each contribute to the Zn(2+) site.

Belongs to the universal ribosomal protein uS14 family. Zinc-binding uS14 subfamily. As to quaternary structure, part of the 30S ribosomal subunit. Contacts proteins S3 and S10. Zn(2+) is required as a cofactor.

Its function is as follows. Binds 16S rRNA, required for the assembly of 30S particles and may also be responsible for determining the conformation of the 16S rRNA at the A site. This is Small ribosomal subunit protein uS14 from Frankia casuarinae (strain DSM 45818 / CECT 9043 / HFP020203 / CcI3).